The following is a 123-amino-acid chain: Ribosome-binding factor A (123 aa).

The protein belongs to the RbfA family. In terms of assembly, monomer. Binds 30S ribosomal subunits, but not 50S ribosomal subunits or 70S ribosomes.

It is found in the cytoplasm. In terms of biological role, one of several proteins that assist in the late maturation steps of the functional core of the 30S ribosomal subunit. Associates with free 30S ribosomal subunits (but not with 30S subunits that are part of 70S ribosomes or polysomes). Required for efficient processing of 16S rRNA. May interact with the 5'-terminal helix region of 16S rRNA. The chain is Ribosome-binding factor A from Legionella pneumophila (strain Lens).